The primary structure comprises 866 residues: MGLKARRPAGAAGGGGDGGGGGGGAANPAGGDAAAAGDEERKVGLAPGDVEQVTLALGAGADKDGTLLLEGGGRDEGQRRTPQGIGLLAKTPLSRPVKRNNAKYRRIQTLIYDALERPRGWALLYHALVFLIVLGCLILAVLTTFREYETVSGDWLLLLETFAIFIFGAEFALRIWAAGCCCRYKGWRGRLKFARKPLCMLDIFVLIASVPVVAVGNQGNVLATSLRSLRFLQILRMLRMDRRGGTWKLLGSAICAHSKELITAWYIGFLTLILSSFLVYLVEKDVPEVDAQGEEMKEEFETYADALWWGLITLATIGYGDKTPKTWEGRLIAATFSLIGVSFFALPAGILGSGLALKVQEQHRQKHFEKRRKPAAELIQAAWRYYATNPNRIDLVATWRFYESVVSFPFFRKEQLDPAASQKLGLLDRVRLSNPRGSNTKGKLFTPLNVDAIEESPSKEPKPVGSNNKERFRTAFRMKAYAFWQSSEDAGTGDPTAEDRGYGNDFLIEDMIPTLKAAIRAVRILQFRLYKKKFKETLRPYDVKDVIEQYSAGHLDMLSRIKYLQTRIDMIFTPGPPSTPKHKKSQRGAAFTYPSQQSPRNEPYVARPSTSETEDQSMMGKFVKVERQVHDMGKKLDFLVDMHLQHMERLQVHVAGFSPSKGASSPAEAEQKEDRRDADLKTIICNYSETGAPDAPYSFHQVPVDKVGPYGFFAHDPVNLPLGGPSSGKGHATPYAERPTVLPILTLLDSRGSYRSQVELHGPCSDRVSPRQRRSITRDSDTPLSLMSVNHEELERSPSGFSISQDRDDYAFGPSGGSSWMREKRYLAEGETDTDTEPFTPSGSLPLSSTGDGISDSIWTPSGKPT.

Positions 1–42 are disordered; it reads MGLKARRPAGAAGGGGDGGGGGGGAANPAGGDAAAAGDEERK. Residues 1–120 lie on the Cytoplasmic side of the membrane; it reads MGLKARRPAG…IYDALERPRG (120 aa). Gly residues predominate over residues 11–25; sequence AAGGGGDGGGGGGGA. The segment covering 26–36 has biased composition (low complexity); that stretch reads ANPAGGDAAAA. Threonine 81 carries the post-translational modification Phosphothreonine. The helical transmembrane segment at 121-143 threads the bilayer; it reads WALLYHALVFLIVLGCLILAVLT. The Extracellular segment spans residues 144 to 153; sequence TFREYETVSG. A helical transmembrane segment spans residues 154–175; the sequence is DWLLLLETFAIFIFGAEFALRI. The Cytoplasmic portion of the chain corresponds to 176–193; it reads WAAGCCCRYKGWRGRLKF. A helical transmembrane segment spans residues 194-213; the sequence is ARKPLCMLDIFVLIASVPVV. Over 214–225 the chain is Extracellular; it reads AVGNQGNVLATS. Residues 226–244 traverse the membrane as a helical; Voltage-sensor segment; the sequence is LRSLRFLQILRMLRMDRRG. Position 243 (arginine 243) interacts with a 1,2-diacyl-sn-glycero-3-phospho-(1D-myo-inositol-4,5-bisphosphate). Topologically, residues 245-256 are cytoplasmic; that stretch reads GTWKLLGSAICA. A helical membrane pass occupies residues 257–282; it reads HSKELITAWYIGFLTLILSSFLVYLV. Residue lysine 259 coordinates a 1,2-diacyl-sn-glycero-3-phospho-(1D-myo-inositol-4,5-bisphosphate). At 283 to 302 the chain is on the extracellular side; sequence EKDVPEVDAQGEEMKEEFET. Residues 303–315 constitute an intramembrane region (pore-forming); that stretch reads YADALWWGLITLA. The Selectivity filter signature appears at 316-321; it reads TIGYGD. The Extracellular segment spans residues 316-326; it reads TIGYGDKTPKT. A helical transmembrane segment spans residues 327 to 353; it reads WEGRLIAATFSLIGVSFFALPAGILGS. Residues 354-866 are Cytoplasmic-facing; sequence GLALKVQEQH…SIWTPSGKPT (513 aa). The mediates interaction with calmodulin stretch occupies residues 356–537; that stretch reads ALKVQEQHRQ…RLYKKKFKET (182 aa). Lysine 366 contacts a 1,2-diacyl-sn-glycero-3-phospho-(1D-myo-inositol-4,5-bisphosphate). Disordered stretches follow at residues 574 to 617, 656 to 676, and 757 to 866; these read PGPP…EDQS, GFSPSKGASSPAEAEQKEDRR, and QVEL…GKPT. Over residues 837–866 the composition is skewed to polar residues; it reads EPFTPSGSLPLSSTGDGISDSIWTPSGKPT.

It belongs to the potassium channel family. KQT (TC 1.A.1.15) subfamily. Kv7.3/KCNQ3 sub-subfamily. Heterotetramer with KCNQ2; forms heterotetrameric native M-channel responsible for the M-current. Interacts with calmodulin; the interaction is calcium-independent, constitutive and participates in the proper assembly of a functional M-channel. Heteromultimer with KCNQ5. May associate with KCNE2. Interacts with IQCJ-SCHIP1. Interacts (via the pore module) with SLC5A3/SMIT1; forms a coregulatory complex that alters ion selectivity, voltage dependence and gating kinetics of the channel. In terms of processing, KCNQ2/KCNQ3 are ubiquitinated by NEDD4L. Ubiquitination leads to protein degradation. Degradation induced by NEDD4L is inhibited by USP36.

It localises to the cell membrane. It carries out the reaction K(+)(in) = K(+)(out). The enzyme catalyses Rb(+)(in) = Rb(+)(out). It catalyses the reaction Cs(+)(in) = Cs(+)(out). The catalysed reaction is Na(+)(in) = Na(+)(out). Its activity is regulated as follows. Phosphatidylinositol-4,5-bisphosphate (PIP2) potentiates the activation of KCNQ channels by enhancing the electro-mechanical coupling of the voltage-sensing domain (VSD) and the pore-forming domain (PD). In the closed state of the channel, PIP2 is anchored at the S2-S3 loop; upon channel activation, PIP2 interacts with the S4-S5 linker and is involved in channel gating. Calcium suppresses KCNQ2-KCNQ3 channel currents, with calcium-bound calmodulin inducing a change in channel configuration which leads to the reduction of channel affinity for PIP2 and subsequent current suppression. Its function is as follows. Pore-forming subunit of the voltage-gated potassium (Kv) M-channel which is responsible for the M-current, a key controller of neuronal excitability. M-channel is composed of pore-forming subunits KCNQ2 and KCNQ3 assembled as heterotetramers. The native M-current has a slowly activating and deactivating potassium conductance which plays a critical role in determining the subthreshold electrical excitability of neurons as well as the responsiveness to synaptic inputs. M-channel is selectively permeable in vitro to other cations besides potassium, in decreasing order of affinity K(+) &gt; Rb(+) &gt; Cs(+) &gt; Na(+). M-channel association with SLC5A3/SMIT1 alters channel ion selectivity, increasing Na(+) and Cs(+) permeation relative to K(+). Suppressed by activation of M1 muscarinic acetylcholine receptors. KCNQ3 also associates with KCNQ5 to form a functional channel in vitro and may also contribute to the M-current in brain. The sequence is that of Potassium voltage-gated channel subfamily KQT member 3 from Bos taurus (Bovine).